A 201-amino-acid polypeptide reads, in one-letter code: MAEPGFFNAMLIGALIFGYVLGSIPFGLILTRLAGLGDVRAIGSGNIGATNVLRTGNKKLAAATLILDALKGTAAALIAAHFGQNAAIAAGFGAFIGHLFPVWIGFKGGKGVATYLGVLIGLAWAGALVFAAAWIVTALLTRYSSPSALVASLIVPIALYSRGNQALAALFAIMTVIVFIKHRANISRLLNGTESKIGAKG.

5 consecutive transmembrane segments (helical) span residues 10-30, 60-80, 86-106, 116-136, and 166-186; these read MLIGALIFGYVLGSIPFGLIL, LAAATLILDALKGTAAALIAA, AAIAAGFGAFIGHLFPVWIGF, LGVLIGLAWAGALVFAAAWIV, and ALAALFAIMTVIVFIKHRANI.

The protein belongs to the PlsY family. In terms of assembly, probably interacts with PlsX.

The protein resides in the cell inner membrane. The catalysed reaction is an acyl phosphate + sn-glycerol 3-phosphate = a 1-acyl-sn-glycero-3-phosphate + phosphate. It functions in the pathway lipid metabolism; phospholipid metabolism. Functionally, catalyzes the transfer of an acyl group from acyl-phosphate (acyl-PO(4)) to glycerol-3-phosphate (G3P) to form lysophosphatidic acid (LPA). This enzyme utilizes acyl-phosphate as fatty acyl donor, but not acyl-CoA or acyl-ACP. In Brucella abortus (strain 2308), this protein is Glycerol-3-phosphate acyltransferase.